The sequence spans 280 residues: Four and a half LIM domains protein 1 (280 aa).

Ser2 is modified (N-acetylserine). Lys4 bears the N6-acetyllysine mark. The segment at 7–31 adopts a C4-type zinc-finger fold; the sequence is CHYCRDPLQGKKYVQKDGRHCCLKC. LIM zinc-binding domains are found at residues 40 to 92, 101 to 153, 162 to 212, and 221 to 276; these read CVDC…CNKC, CKGC…CVTC, CVKC…CVDC, and CAGC…CPDC. Lys86 participates in a covalent cross-link: Glycyl lysine isopeptide (Lys-Gly) (interchain with G-Cter in SUMO2).

In terms of tissue distribution, isoform 1 seems to be most abundant in each tissue and isoform 2 much less abundant. Isoform 1 is highly expressed in skeletal muscle and lung, and to a lesser extent in heart, brain and kidney. Isoform 2 was found in brain, lung kidney and genital organs.

Its subcellular location is the cytoplasm. The protein resides in the nucleus. Its function is as follows. May have an involvement in muscle development or hypertrophy. Isoform 2 binds to RBP-J and plays a negative regulatory role in the RBP-J-mediated transcription in mammalian systems. The chain is Four and a half LIM domains protein 1 (Fhl1) from Mus musculus (Mouse).